The primary structure comprises 546 residues: MAAKDVVFGDSARAKMVEGVNILANAVKVTLGPKGRNVVLERSFGGPTVTKDGVSVAKEIELKDKLQNMGAQMVKEVASKTSDNAGDGTTTATVLAQSIVREGMKYVASGMNPMDLKRGIDKAVTAAIEELRKISKPCTTNKEIAQVGAISANSDSSIGDRIAEAMDKVGKEGVITVEDGKSLQDELDVVEGMQFDRGYLSPYFINNPDKQVAVLDNPFVLLHDKKVSNIRDLLPVLEQVAKAGRPLLIIAEDVEGEALATLVVNNIRGILKTVAVKAPGFGDRRKAMLEDIAILTGGQVIAEETGLTLEKATLAELGQAKRIEVGKENTTIIDGAGEAANIEARVKQVRTQIEEATSDYDREKLQERVAKLAGGVAVIKVGAATEVEMKEKKARVEDALHATRAAVEEGIVAGGGVALIRARTAIAGLKGANADQDAGIKIVLRAMEEPLRQIVTNGGEEASVVVAAVAAGQGNYGYNAATGEYVDLVDAGVVDPTKVTRTALQNAASVAGLLLTTDAAVCELPKEDAPMAGGMPGGMGGMGMDM.

Residues 30–33, Lys51, 87–91, Gly415, 479–481, and Asp495 contribute to the ATP site; these read TLGP, DGTTT, and NAA.

This sequence belongs to the chaperonin (HSP60) family. In terms of assembly, forms a cylinder of 14 subunits composed of two heptameric rings stacked back-to-back. Interacts with the co-chaperonin GroES.

The protein localises to the cytoplasm. The enzyme catalyses ATP + H2O + a folded polypeptide = ADP + phosphate + an unfolded polypeptide.. Its function is as follows. Together with its co-chaperonin GroES, plays an essential role in assisting protein folding. The GroEL-GroES system forms a nano-cage that allows encapsulation of the non-native substrate proteins and provides a physical environment optimized to promote and accelerate protein folding. The polypeptide is Chaperonin GroEL (Paraburkholderia phytofirmans (strain DSM 17436 / LMG 22146 / PsJN) (Burkholderia phytofirmans)).